The chain runs to 70 residues: Small ribosomal subunit protein bS21 (70 aa).

Belongs to the bacterial ribosomal protein bS21 family.

This Helicobacter acinonychis (strain Sheeba) protein is Small ribosomal subunit protein bS21.